We begin with the raw amino-acid sequence, 114 residues long: Fumarate reductase subunit D (114 aa).

The next 3 helical transmembrane spans lie at 24 to 44 (VSAI…PFGL), 50 to 70 (LITF…TIFP), and 92 to 112 (GGFI…FAVI).

The protein belongs to the FrdD family. As to quaternary structure, part of an enzyme complex containing four subunits: a flavoprotein (FrdA), an iron-sulfur protein (FrdB), and two hydrophobic anchor proteins (FrdC and FrdD).

It is found in the cell inner membrane. Its function is as follows. Anchors the catalytic components of the fumarate reductase complex to the cell membrane, binds quinones. This is Fumarate reductase subunit D from Haemophilus influenzae (strain PittEE).